The chain runs to 103 residues: Large ribosomal subunit protein uL24 (103 aa).

The protein belongs to the universal ribosomal protein uL24 family. In terms of assembly, part of the 50S ribosomal subunit.

Functionally, one of two assembly initiator proteins, it binds directly to the 5'-end of the 23S rRNA, where it nucleates assembly of the 50S subunit. Its function is as follows. One of the proteins that surrounds the polypeptide exit tunnel on the outside of the subunit. This chain is Large ribosomal subunit protein uL24, found in Sinorhizobium fredii (strain NBRC 101917 / NGR234).